Here is a 443-residue protein sequence, read N- to C-terminus: UDP-N-acetylmuramate--L-alanine ligase (443 aa).

110 to 116 (GAHGKTS) lines the ATP pocket.

This sequence belongs to the MurCDEF family.

It is found in the cytoplasm. The catalysed reaction is UDP-N-acetyl-alpha-D-muramate + L-alanine + ATP = UDP-N-acetyl-alpha-D-muramoyl-L-alanine + ADP + phosphate + H(+). Its pathway is cell wall biogenesis; peptidoglycan biosynthesis. Cell wall formation. This is UDP-N-acetylmuramate--L-alanine ligase from Lactococcus lactis subsp. lactis (strain IL1403) (Streptococcus lactis).